The sequence spans 1235 residues: Spike glycoprotein (1235 aa).

The first 13 residues, 1 to 13 (MLFVFILLLPSCL), serve as a signal peptide directing secretion. Positions 1 to 330 (MLFVFILLLP…RRVPNLPDCK (330 aa)) are receptor binding site. The Extracellular segment spans residues 14–1176 (GYIGDFRCIQ…GTYEMYVKWP (1163 aa)). Residues 15-296 (YIGDFRCIQT…SYISEIKCKT (282 aa)) form the BetaCoV S1-NTD domain. 5 disulfide bridges follow: cysteine 21/cysteine 158, cysteine 153/cysteine 187, cysteine 165/cysteine 246, cysteine 284/cysteine 294, and cysteine 329/cysteine 354. N-linked (GlcNAc...) asparagine; by host glycosylation is found at asparagine 31, asparagine 60, and asparagine 134. N-linked (GlcNAc...) asparagine; by host glycosylation is present at asparagine 192. The region spanning 327–477 (PDCKIEEWLT…GINSGTTCST (151 aa)) is the BetaCoV S1-CTD domain. Asparagine 357 is a glycosylation site (N-linked (GlcNAc...) asparagine; by host). Intrachain disulfides connect cysteine 372-cysteine 425 and cysteine 384-cysteine 475. 7 N-linked (GlcNAc...) asparagine; by host glycosylation sites follow: asparagine 435, asparagine 536, asparagine 568, asparagine 576, asparagine 599, asparagine 648, and asparagine 665. Fusion peptide stretches follow at residues 781-802 (SAIE…VEAY) and 800-820 (EAYN…VQSF). Asparagine 804 carries an N-linked (GlcNAc...) asparagine; by host glycan. A disulfide bridge links cysteine 805 with cysteine 816. The interval 881–931 (QKMIASAFNNALGAIQEGFDATNSALGKIQSVVNANAEALNNLLNQLSNRF) is heptad repeat 1. Positions 910 to 954 (QSVVNANAEALNNLLNQLSNRFGAISASLQEILTRLDAVEAKAQI) form a coiled coil. Residues asparagine 1091, asparagine 1101, asparagine 1120, asparagine 1136, and asparagine 1157 are each glycosylated (N-linked (GlcNAc...) asparagine; by host). The tract at residues 1125-1165 (APDLSLDFEKLNVTFLDLTYEMNRIQDAIKKLNESYINLKE) is heptad repeat 2. A coiled-coil region spans residues 1138-1166 (TFLDLTYEMNRIQDAIKKLNESYINLKEV). A helical transmembrane segment spans residues 1177–1197 (WYVWLLIGLAGVAVCVLLFFI). At 1198 to 1235 (CCCTGCGSCCFRKCGSCCDEYGGHQDSIVIHNISAHED) the chain is on the cytoplasmic side. A KxHxx motif is present at residues 1231 to 1235 (SAHED).

This sequence belongs to the betacoronaviruses spike protein family. As to quaternary structure, homotrimer; each monomer consists of a S1 and a S2 subunit. The resulting peplomers protrude from the virus surface as spikes. Post-translationally, specific enzymatic cleavages in vivo yield mature proteins. The precursor is processed into S1 and S2 by host cell furin or another cellular protease to yield the mature S1 and S2 proteins. Additionally, a second cleavage leads to the release of a fusion peptide after viral attachment to host cell receptor. In terms of processing, the cytoplasmic Cys-rich domain is palmitoylated. Spike glycoprotein is digested within host endosomes.

The protein resides in the virion membrane. It localises to the host endoplasmic reticulum-Golgi intermediate compartment membrane. The protein localises to the host cell membrane. Functionally, attaches the virion to the cell membrane by interacting with host receptor, initiating the infection. Mediates fusion of the virion and cellular membranes by acting as a class I viral fusion protein. Under the current model, the protein has at least three conformational states: pre-fusion native state, pre-hairpin intermediate state, and post-fusion hairpin state. During viral and target cell membrane fusion, the coiled coil regions (heptad repeats) assume a trimer-of-hairpins structure, positioning the fusion peptide in close proximity to the C-terminal region of the ectodomain. The formation of this structure appears to drive apposition and subsequent fusion of viral and target cell membranes. Its function is as follows. Acts as a viral fusion peptide which is unmasked following S2 cleavage occurring upon virus endocytosis. The sequence is that of Spike glycoprotein from Mus musculus (Mouse).